A 360-amino-acid polypeptide reads, in one-letter code: MVSKQAFLFSLGSLYLSLLFVFLLMDVYARPANNSALKVEGKEKATDNKDENEIMPPDHLNGVKMEMDGHLNKEFHQEVFLGKEIEEFDEDSEPRRNRRKLAAIFAKVDRNEDKQISANEMQRWIMEKTEEHFQEAVNENKLHFRAVDPDGDGHVSWDEYKIKFLASKGFNEKEVAEKLKNNEDLKIDEETQEVLDNLKDRWFQADNPPADQLLNEEEFLSFLHPEHSQGMLKFMVKEIIRDLDQDGDKKLTLSEFISLPVGTVENQQAQDIDDDWVRDRKKEYEEVIDANHDGIVTMEELEEYMDPMNEYNALNEAKQMIAVADENQDHHLSLEEILKYSEYFTGSKLMDYARNVHEEF.

Positions 1–29 (MVSKQAFLFSLGSLYLSLLFVFLLMDVYA) are cleaved as a signal peptide. Asparagine 33 carries N-linked (GlcNAc...) asparagine glycosylation. 5 consecutive EF-hand domains span residues 96–131 (RNRR…KTEE), 135–170 (EAVN…SKGF), 231–266 (MLKF…TVEN), 276–311 (WVRD…MNEY), and 312–347 (NALN…FTGS). 24 residues coordinate Ca(2+): aspartate 109, asparagine 111, aspartate 113, glutamine 115, glutamate 120, aspartate 148, aspartate 150, aspartate 152, histidine 154, glutamate 159, aspartate 244, aspartate 246, aspartate 248, lysine 250, glutamate 255, aspartate 289, asparagine 291, aspartate 293, glutamate 300, aspartate 325, asparagine 327, aspartate 329, histidine 331, and glutamate 336.

The protein belongs to the CREC family.

The protein localises to the golgi apparatus lumen. In terms of biological role, may regulate calcium-dependent activities in the endoplasmic reticulum lumen or post-ER compartment. In Xenopus tropicalis (Western clawed frog), this protein is 45 kDa calcium-binding protein (sdf4).